The chain runs to 138 residues: Mediator of RNA polymerase II transcription subunit 19 (138 aa).

It belongs to the Mediator complex subunit 19 family. In terms of assembly, component of the Mediator complex.

Its subcellular location is the nucleus. In terms of biological role, component of the Mediator complex, a coactivator involved in the regulated transcription of nearly all RNA polymerase II-dependent genes. Mediator functions as a bridge to convey information from gene-specific regulatory proteins to the basal RNA polymerase II transcription machinery. Mediator is recruited to promoters by direct interactions with regulatory proteins and serves as a scaffold for the assembly of a functional preinitiation complex with RNA polymerase II and the general transcription factors. In Schizosaccharomyces pombe (strain 972 / ATCC 24843) (Fission yeast), this protein is Mediator of RNA polymerase II transcription subunit 19 (med19).